The following is a 99-amino-acid chain: Integration host factor subunit alpha (99 aa).

Belongs to the bacterial histone-like protein family. In terms of assembly, heterodimer of an alpha and a beta chain.

This protein is one of the two subunits of integration host factor, a specific DNA-binding protein that functions in genetic recombination as well as in transcriptional and translational control. The sequence is that of Integration host factor subunit alpha (ihfA) from Xylella fastidiosa (strain 9a5c).